An 809-amino-acid chain; its full sequence is Ferric-pyoverdine BN7/BN8 receptor (809 aa).

Residues 1-45 (MNHTARKRQGWQRSVSQKLAGAVVQGIACMGASAPLLLMPAWATA) form the signal peptide. The TBDR plug domain occupies 166–273 (TPRETPQSLT…PSATINLIRK (108 aa)). A TBDR beta-barrel domain is found at 278-809 (EAQASITGEA…NVMTSFKYSF (532 aa)). The TonB C-terminal box motif lies at 792–809 (YGVYGTPRNVMTSFKYSF).

The protein belongs to the TonB-dependent receptor family.

It is found in the cell outer membrane. Specific receptor for the siderophores ferric pyoverdines (pseudobactins) BN8 and BN7, iron chelating molecules that allow the organism to extract iron from the environment, especially under iron-restricted conditions. This is Ferric-pyoverdine BN7/BN8 receptor (pupB) from Pseudomonas putida (Arthrobacter siderocapsulatus).